Reading from the N-terminus, the 69-residue chain is RICYLAPRDTQICAPGQEICYLKSWDDGTGFLKGNRLEFGCAATCPTVKPGIDIKCCSTDKCNPHPKLA.

Intrachain disulfides connect C3/C20, C13/C41, C45/C56, and C57/C62.

Belongs to the three-finger toxin family. Long-chain subfamily. Type II alpha-neurotoxin sub-subfamily. Expressed by the venom gland.

It is found in the secreted. In terms of biological role, binds with high affinity to muscular nicotinic acetylcholine receptors (nAChRs), whereas it binds with a low affinity to neuronal alpha-7/CHRNA7 nAChRs. In Laticauda colubrina (Yellow-lipped sea krait), this protein is Toxin Lc a.